Consider the following 280-residue polypeptide: MNKNHPELLQNVTDVTAARSLPLWKRENLTTTEPDWLAEEVPVALVYNGISHVVMMASPKDLEIFALGFSLSEGIVESSHEIYGMDIIHGCNGIEIQVELSSRRFTELKARRRNLAGRTGCGVCGVEQLNDIVRPLAPLPFTQTFSLDNLDGALRQLASVQPVGELTGCTHAAAWLTPQGDIAGGHEDVGRHVALDKLLGRRAREAWQQGAVLVSSRASYEMVQKAATCGVEILFAVSAATTLAVEVAERCNLTLVGFSRPGRATIYTHPQRLIAGDKNA.

The Cysteine persulfide intermediate role is filled by C121. A Mo-bis(molybdopterin guanine dinucleotide)-binding site is contributed by 258 to 263 (FSRPGR).

The protein belongs to the FdhD family.

The protein localises to the cytoplasm. In terms of biological role, required for formate dehydrogenase (FDH) activity. Acts as a sulfur carrier protein that transfers sulfur from IscS to the molybdenum cofactor prior to its insertion into FDH. The sequence is that of Sulfur carrier protein FdhD from Cronobacter sakazakii (strain ATCC BAA-894) (Enterobacter sakazakii).